Reading from the N-terminus, the 473-residue chain is Digalactosyldiacylglycerol synthase 2, chloroplastic (473 aa).

Interaction with the membrane lipid bilayer regions lie at residues 130-148 (LTWF…YVIG) and 227-245 (QPFT…SKGY).

Belongs to the glycosyltransferase group 1 family. Glycosyltransferase 4 subfamily. In terms of tissue distribution, expressed in leaves, flowers and roots, but not in stems and siliques.

Its subcellular location is the plastid. It is found in the chloroplast outer membrane. It catalyses the reaction a 1,2-diacyl-3-O-(beta-D-galactosyl)-sn-glycerol + UDP-alpha-D-galactose = a 1,2-diacyl-3-O-[alpha-D-galactosyl-(1-&gt;6)-beta-D-galactosyl]-sn-glycerol + UDP + H(+). With respect to regulation, stimulated by anionic phospholipids. In terms of biological role, involved in the synthesis of diacylglycerol galactolipids that are specifically found in thylakoid membranes. Specific for alpha-glycosidic linkages. During phosphate shortage, involved in the biosynthesis of digalactosyldiacylglycerol (DGDG) which rescues the limitation of phospholipids. The protein is Digalactosyldiacylglycerol synthase 2, chloroplastic of Arabidopsis thaliana (Mouse-ear cress).